We begin with the raw amino-acid sequence, 252 residues long: Accessory gland protein Acp32CD (252 aa).

The N-terminal stretch at 1–19 (MWRMRMRLLTGYLVLLALG) is a signal peptide. A disordered region spans residues 42–252 (PDGEGGTGVD…GAKEDDYEEM (211 aa)). Positions 44–69 (GEGGTGVDGGGGGAGGGAAGPGGGTG) are enriched in gly residues. 4 stretches are compositionally biased toward basic and acidic residues: residues 104–122 (AIGK…DSKD), 142–153 (SDSKDAKDRQDK), 159–171 (QEGK…HHSS), and 209–225 (NGAR…KEVA).

As to expression, seminal fluid.

It is found in the secreted. Responsible for physiological and behavioral changes in mated female flies. The chain is Accessory gland protein Acp32CD (Acp32CD) from Drosophila melanogaster (Fruit fly).